The primary structure comprises 757 residues: UDP-N-acetylmuramoyl-L-alanyl-D-glutamate--2,6-diaminopimelate ligase MurE homolog, chloroplastic (757 aa).

The span at M1 to P11 shows a compositional bias: low complexity. A chloroplast-targeting transit peptide spans M1 to E53. Disordered stretches follow at residues M1–F112, F126–L152, and V172–G195. The segment covering F12–R30 has biased composition (pro residues). Acidic residues-rich tracts occupy residues A47–E56 and P142–L152.

The protein belongs to the MurCDEF family. MurE subfamily. In terms of assembly, component of the plastid-encoded plastid RNA polymerase (PEP) complex.

It is found in the plastid. The protein localises to the chloroplast. In terms of biological role, required for the activity of the plastid-encoded RNA polymerase (PEP) and full expression of genes transcribed by PEP. In Oryza sativa subsp. japonica (Rice), this protein is UDP-N-acetylmuramoyl-L-alanyl-D-glutamate--2,6-diaminopimelate ligase MurE homolog, chloroplastic.